The following is a 247-amino-acid chain: tRNA (guanine-N(1)-)-methyltransferase (247 aa).

S-adenosyl-L-methionine-binding positions include Gly-115 and Ile-134 to Leu-139.

This sequence belongs to the RNA methyltransferase TrmD family. As to quaternary structure, homodimer.

The protein localises to the cytoplasm. It carries out the reaction guanosine(37) in tRNA + S-adenosyl-L-methionine = N(1)-methylguanosine(37) in tRNA + S-adenosyl-L-homocysteine + H(+). Functionally, specifically methylates guanosine-37 in various tRNAs. In Anaeromyxobacter sp. (strain K), this protein is tRNA (guanine-N(1)-)-methyltransferase.